Reading from the N-terminus, the 215-residue chain is Cytochrome b6 (215 aa).

A helical membrane pass occupies residues 32 to 52 (IFYCLGGITLTCFLVQVATGF). Cys35 contacts heme c. Heme b is bound by residues His86 and His100. The next 3 membrane-spanning stretches (helical) occupy residues 90-110 (ASMMVLMMILHVFRVYLTGGF), 116-136 (LTWITGVILAVLTVSFGVTGY), and 186-206 (LHTFVLPLLTAVFMLMHFLMI). 2 residues coordinate heme b: His187 and His202.

Belongs to the cytochrome b family. PetB subfamily. The 4 large subunits of the cytochrome b6-f complex are cytochrome b6, subunit IV (17 kDa polypeptide, PetD), cytochrome f and the Rieske protein, while the 4 small subunits are PetG, PetL, PetM and PetN. The complex functions as a dimer. Heme b is required as a cofactor. Heme c serves as cofactor.

It is found in the plastid. Its subcellular location is the chloroplast thylakoid membrane. Component of the cytochrome b6-f complex, which mediates electron transfer between photosystem II (PSII) and photosystem I (PSI), cyclic electron flow around PSI, and state transitions. The sequence is that of Cytochrome b6 from Psilotum nudum (Whisk fern).